A 351-amino-acid polypeptide reads, in one-letter code: Cytosolic sulfotransferase 9 (351 aa).

Residues 1 to 11 (MDEKDILRNLR) are compositionally biased toward basic and acidic residues. Residues 1–24 (MDEKDILRNLREEEEEEEENQSEE) are disordered. The segment covering 12 to 22 (EEEEEEEENQS) has biased composition (acidic residues). Position 80 to 85 (80 to 85 (KSGTTW)) interacts with 3'-phosphoadenylyl sulfate. His152 functions as the Proton acceptor in the catalytic mechanism. 3'-phosphoadenylyl sulfate-binding positions include Arg174, Ser182, Tyr252, and 317 to 319 (RKG).

The protein belongs to the sulfotransferase 1 family. In terms of tissue distribution, expressed in roots and leaves.

The protein resides in the cytoplasm. Functionally, sulfotransferase that utilizes 3'-phospho-5'-adenylyl sulfate (PAPS) as sulfonate donor. No activity with brassinosteroids. This chain is Cytosolic sulfotransferase 9 (STO9), found in Arabidopsis thaliana (Mouse-ear cress).